A 277-amino-acid chain; its full sequence is Large ribosomal subunit protein uL2 (277 aa).

The segment at 219 to 277 (RPQTRGSAMNPVDHPHGGGEGKKNSGRHPVTPWGKPTKGAKTRRKKASDKLIISRRKGK) is disordered. The span at 231–241 (DHPHGGGEGKK) shows a compositional bias: basic and acidic residues. The span at 256–277 (KGAKTRRKKASDKLIISRRKGK) shows a compositional bias: basic residues.

It belongs to the universal ribosomal protein uL2 family. Part of the 50S ribosomal subunit. Forms a bridge to the 30S subunit in the 70S ribosome.

One of the primary rRNA binding proteins. Required for association of the 30S and 50S subunits to form the 70S ribosome, for tRNA binding and peptide bond formation. It has been suggested to have peptidyltransferase activity; this is somewhat controversial. Makes several contacts with the 16S rRNA in the 70S ribosome. The protein is Large ribosomal subunit protein uL2 of Campylobacter concisus (strain 13826).